A 173-amino-acid polypeptide reads, in one-letter code: uncharacterized protein (173 aa).

It belongs to the M.jannaschii MJ0150/MJ0739/MJ0745/MJ1460/MJ1642 family.

This is an uncharacterized protein from Methanocaldococcus jannaschii (strain ATCC 43067 / DSM 2661 / JAL-1 / JCM 10045 / NBRC 100440) (Methanococcus jannaschii).